Here is a 259-residue protein sequence, read N- to C-terminus: Alpha-acetolactate decarboxylase (259 aa).

It belongs to the alpha-acetolactate decarboxylase family.

The enzyme catalyses (2S)-2-acetolactate + H(+) = (R)-acetoin + CO2. It functions in the pathway polyol metabolism; (R,R)-butane-2,3-diol biosynthesis; (R,R)-butane-2,3-diol from pyruvate: step 2/3. Functionally, converts acetolactate into acetoin, which can be excreted by the cells. This may be a mechanism for controlling the internal pH of cells in the stationary stage. The sequence is that of Alpha-acetolactate decarboxylase (budA) from Raoultella terrigena (Klebsiella terrigena).